Reading from the N-terminus, the 362-residue chain is S-adenosylmethionine:tRNA ribosyltransferase-isomerase (362 aa).

It belongs to the QueA family. As to quaternary structure, monomer.

Its subcellular location is the cytoplasm. The catalysed reaction is 7-aminomethyl-7-carbaguanosine(34) in tRNA + S-adenosyl-L-methionine = epoxyqueuosine(34) in tRNA + adenine + L-methionine + 2 H(+). It functions in the pathway tRNA modification; tRNA-queuosine biosynthesis. Functionally, transfers and isomerizes the ribose moiety from AdoMet to the 7-aminomethyl group of 7-deazaguanine (preQ1-tRNA) to give epoxyqueuosine (oQ-tRNA). This chain is S-adenosylmethionine:tRNA ribosyltransferase-isomerase, found in Syntrophus aciditrophicus (strain SB).